The sequence spans 242 residues: uncharacterized protein (242 aa).

The 61-residue stretch at 2 to 62 (EKAYKILSVQ…VEKPSVIFED (61 aa)) folds into the S4 RNA-binding domain. The active site involves Asp93.

It belongs to the pseudouridine synthase RluA family.

It carries out the reaction a uridine in RNA = a pseudouridine in RNA. This is an uncharacterized protein from Helicobacter pylori (strain ATCC 700392 / 26695) (Campylobacter pylori).